The following is a 381-amino-acid chain: uncharacterized protein (381 aa).

Positions 1 to 16 are cleaved as a signal peptide; that stretch reads MQTLLFYFFFINLIFA. The Lumenal segment spans residues 17–303; the sequence is HDLNVKTYKP…KILENSPCPN (287 aa). The cysteines at positions 118 and 149 are disulfide-linked. Residues N133, N192, N225, N243, N246, and N287 are each glycosylated (N-linked (GlcNAc...) asparagine). Residues 304–324 form a helical membrane-spanning segment; the sequence is QPSIQPFGILMMLVSTIYGNF. Residues 325–359 are Cytoplasmic-facing; it reads KNLYNCIKRNTIGYIYNSIYDFWITEGMLFPMRNM. A helical transmembrane segment spans residues 360 to 380; that stretch reads DIFKITAISIGLSIPVFLWLL. K381 is a topological domain (lumenal).

This sequence belongs to the calreticulin family.

The protein localises to the endoplasmic reticulum membrane. This is an uncharacterized protein from Schizosaccharomyces pombe (strain 972 / ATCC 24843) (Fission yeast).